We begin with the raw amino-acid sequence, 591 residues long: V-type ATP synthase alpha chain (591 aa).

233 to 240 (GPFGAGKT) provides a ligand contact to ATP.

The protein belongs to the ATPase alpha/beta chains family.

The catalysed reaction is ATP + H2O + 4 H(+)(in) = ADP + phosphate + 5 H(+)(out). Its function is as follows. Produces ATP from ADP in the presence of a proton gradient across the membrane. The V-type alpha chain is a catalytic subunit. This is V-type ATP synthase alpha chain from Streptococcus pneumoniae (strain ATCC 700669 / Spain 23F-1).